Consider the following 75-residue polypeptide: Kappa-thalatoxin-Cad2a (75 aa).

Positions methionine 1–alanine 22 are cleaved as a signal peptide. Positions arginine 23 to arginine 40 are excised as a propeptide. Residues cysteine 43–cysteine 75 form the ShKT domain. 3 cysteine pairs are disulfide-bonded: cysteine 43–cysteine 75, cysteine 52–cysteine 68, and cysteine 57–cysteine 72.

It belongs to the sea anemone type 1 potassium channel toxin family. Type 1a subfamily.

It is found in the secreted. The protein localises to the nematocyst. In terms of biological role, inhibits voltage-gated potassium channels (Kv) with higher potency for Kv1.1/KCNA1 and Kv1.3/KCNA3. This is Kappa-thalatoxin-Cad2a from Cryptodendrum adhaesivum (Adhesive sea anemone).